Here is a 141-residue protein sequence, read N- to C-terminus: Large ribosomal subunit protein uL11 (141 aa).

Belongs to the universal ribosomal protein uL11 family. In terms of assembly, part of the ribosomal stalk of the 50S ribosomal subunit. Interacts with L10 and the large rRNA to form the base of the stalk. L10 forms an elongated spine to which L12 dimers bind in a sequential fashion forming a multimeric L10(L12)X complex. In terms of processing, one or more lysine residues are methylated.

In terms of biological role, forms part of the ribosomal stalk which helps the ribosome interact with GTP-bound translation factors. The sequence is that of Large ribosomal subunit protein uL11 from Clostridioides difficile (strain 630) (Peptoclostridium difficile).